The chain runs to 303 residues: Pyridoxal 5'-phosphate synthase subunit PdxS (303 aa).

Asp-33 lines the D-ribose 5-phosphate pocket. The active-site Schiff-base intermediate with D-ribose 5-phosphate is Lys-90. Residue Gly-162 participates in D-ribose 5-phosphate binding. A D-glyceraldehyde 3-phosphate-binding site is contributed by Arg-174. Residues Gly-223 and 244 to 245 (GS) contribute to the D-ribose 5-phosphate site.

It belongs to the PdxS/SNZ family. In terms of assembly, in the presence of PdxT, forms a dodecamer of heterodimers.

The enzyme catalyses aldehydo-D-ribose 5-phosphate + D-glyceraldehyde 3-phosphate + L-glutamine = pyridoxal 5'-phosphate + L-glutamate + phosphate + 3 H2O + H(+). It participates in cofactor biosynthesis; pyridoxal 5'-phosphate biosynthesis. Catalyzes the formation of pyridoxal 5'-phosphate from ribose 5-phosphate (RBP), glyceraldehyde 3-phosphate (G3P) and ammonia. The ammonia is provided by the PdxT subunit. Can also use ribulose 5-phosphate and dihydroxyacetone phosphate as substrates, resulting from enzyme-catalyzed isomerization of RBP and G3P, respectively. This is Pyridoxal 5'-phosphate synthase subunit PdxS from Streptomyces coelicolor (strain ATCC BAA-471 / A3(2) / M145).